Consider the following 169-residue polypeptide: UPF0398 protein Spy49_1277c (169 aa).

Belongs to the UPF0398 family.

This chain is UPF0398 protein Spy49_1277c, found in Streptococcus pyogenes serotype M49 (strain NZ131).